The chain runs to 213 residues: Histone H1.3 (213 aa).

S1 carries the post-translational modification N-acetylserine. A compositionally biased stretch (low complexity) spans 1–15; the sequence is SEAPAETAAPAPAEK. A disordered region spans residues 1–41; it reads SEAPAETAAPAPAEKSPAKKKKAAKKPGAGAAKRKAAGPPV. Residue K15 is modified to N6-acetyllysine. K35 and K53 each carry N6-(beta-hydroxybutyryl)lysine. The H15 domain maps to 37 to 110; the sequence is AGPPVSELIT…GASGSFKLDK (74 aa). At R55 the chain carries Citrulline. Residues K65, K86, and K91 each carry the N6-(beta-hydroxybutyryl)lysine modification. A disordered region spans residues 92–213; it reads GTLVETKGTG…AKKTAAKKKK (122 aa). The residue at position 105 (S105) is a Phosphoserine. Position 107 is an N6-(beta-hydroxybutyryl)lysine (K107). The span at 107–119 shows a compositional bias: basic and acidic residues; sequence KLDKKAASGEAKP. 3 stretches are compositionally biased toward basic residues: residues 120–131, 138–170, and 179–213; these read KPKKAGAAKPKK, KKPKKAAGAKKAVKKTPKKAPKPKAAAKPKVAK, and KSPKKAKAVKPKAAKPKAPKPKAAKAKKTAAKKKK.

Belongs to the histone H1/H5 family. Post-translationally, H1 histones are progressively phosphorylated during the cell cycle, becoming maximally phosphorylated during late G2 phase and M phase, and being dephosphorylated sharply thereafter. Citrullination at Arg-55 (H1R54ci) by PADI4 takes place within the DNA-binding site of H1 and results in its displacement from chromatin and global chromatin decondensation, thereby promoting pluripotency and stem cell maintenance.

It localises to the nucleus. The protein localises to the chromosome. Its function is as follows. Histones H1 are necessary for the condensation of nucleosome chains into higher-order structures. In Oryctolagus cuniculus (Rabbit), this protein is Histone H1.3.